A 2214-amino-acid chain; its full sequence is Sortilin-related receptor (2214 aa).

The first 28 residues, 1–28 (MATRSSRRESRLPFLFTLVALLPPGALC), serve as a signal peptide directing secretion. Residues 29–81 (EVWTQRLHGGSAPLPQDRGFLVVQGDPRELRLWARGDARGASRADEKPLRRKR) constitute a propeptide, removed in mature form. The Cell attachment site signature appears at 63-65 (RGD). Residues 82–2137 (SAALQPEPIK…TQAARSTDVA (2056 aa)) are Lumenal-facing. Asn99 carries an N-linked (GlcNAc...) asparagine glycan. At Ser114 the chain carries Phosphoserine. The BNR 1 repeat unit spans residues 136–147 (YVSYDYGKSFKK). An N-linked (GlcNAc...) asparagine glycan is attached at Asn158. The stretch at 232–243 (WKSDDFGQTWIM) is one BNR 2 repeat. N-linked (GlcNAc...) asparagine glycans are attached at residues Asn368 and Asn430. 3 BNR repeats span residues 441-452 (VITFDKGGTWEF), 521-532 (YISSSAGARWRE), and 562-573 (KYSTNEGETWKT). N-linked (GlcNAc...) asparagine glycosylation is found at Asn616, Asn674, Asn818, and Asn871. LDL-receptor class B repeat units follow at residues 800–843 (NCLY…EPLS), 844–887 (QLLY…VPQE), 888–932 (GVMF…DDQW), 933–970 (IYWT…AVFK), and 971–1013 (NEIY…FYKG). The EGF-like domain maps to 1026–1072 (CSLLCLPKANNSRSCRCPEDVSSSVLPSGDLMCDCPQGYQLKNNTCV). N-linked (GlcNAc...) asparagine glycosylation is found at Asn1035 and Asn1068. 9 consecutive LDL-receptor class A domains span residues 1076–1114 (NTCL…NCPT), 1115–1155 (TICD…HCEM), 1156–1194 (HQCR…NCTA), 1198–1236 (TCEA…VNCE), 1238–1272 (KCNG…QHCE), 1273–1317 (PLCT…GCSQ), 1323–1361 (KVCD…NCEN), 1366–1405 (PNCS…DCGD), and 1417–1455 (STCL…ACPL). 21 disulfides stabilise this stretch: Cys1078-Cys1090, Cys1085-Cys1103, Cys1097-Cys1112, Cys1117-Cys1131, Cys1125-Cys1144, Cys1138-Cys1153, Cys1158-Cys1170, Cys1165-Cys1183, Cys1177-Cys1192, Cys1199-Cys1211, Cys1206-Cys1224, Cys1218-Cys1235, Cys1239-Cys1249, Cys1244-Cys1262, Cys1256-Cys1271, Cys1275-Cys1289, Cys1283-Cys1302, Cys1296-Cys1315, Cys1325-Cys1337, Cys1332-Cys1350, and Cys1344-Cys1359. An N-linked (GlcNAc...) asparagine glycan is attached at Asn1164. N-linked (GlcNAc...) asparagine glycosylation is present at Asn1191. Asn1246 carries N-linked (GlcNAc...) asparagine glycosylation. Residue Asn1367 is glycosylated (N-linked (GlcNAc...) asparagine). Cystine bridges form between Cys1368–Cys1381, Cys1376–Cys1394, Cys1388–Cys1403, Cys1419–Cys1431, Cys1426–Cys1444, and Cys1438–Cys1453. A glycan (N-linked (GlcNAc...) asparagine) is linked at Asn1458. LDL-receptor class A domains are found at residues 1469-1508 (GRCD…NCPT) and 1512-1551 (LTCM…ACSD). Disulfide bonds link Cys1471–Cys1484, Cys1478–Cys1497, Cys1491–Cys1506, Cys1514–Cys1527, Cys1521–Cys1540, and Cys1534–Cys1549. Fibronectin type-III domains are found at residues 1557-1649 (KVQN…TPEG), 1653-1745 (APRN…TIKG), 1749-1844 (PPPD…VRPP), 1843-1927 (PPAP…VVKM), 1934-2029 (PPRH…APDA), and 2030-2118 (LKII…LYDE). Asn1608, Asn1706, Asn1733, Asn1809, Asn1854, Asn1894, Asn1986, Asn2010, Asn2054, Asn2069, Asn2076, and Asn2092 each carry an N-linked (GlcNAc...) asparagine glycan. Residues 2138–2158 (AVVVPILFLILLSLGVGFAIL) form a helical membrane-spanning segment. The Cytoplasmic segment spans residues 2159–2214 (YTKHRRLQSSFTAFANSHYSSRLGSAIFSSGDDLGEDDEDAPMITGFSDDVPMVIA). Positions 2161-2164 (KHRR) match the Potential nuclear localization signal for the C-terminal fragment generated by PSEN1 motif. The short motif at 2172–2177 (FANSHY) is the Endocytosis signal element. The tract at residues 2190–2214 (DDLGEDDEDAPMITGFSDDVPMVIA) is required for efficient Golgi apparatus - endosome sorting. The interval 2201–2214 (MITGFSDDVPMVIA) is required for interaction with GGA1 and GGA2. Ser2206 is subject to Phosphoserine; by ROCK2. The DXXLL motif involved in the interaction with GGA1 signature appears at 2208-2212 (DVPMV).

Belongs to the VPS10-related sortilin family. SORL1 subfamily. As to quaternary structure, after maturation cleavage, interacts (via N-terminus) with its own propeptide; this interaction prevents interaction with other ligands, including CRLF1, GDNF, GFRA1, IL6 and IL6R. Interacts (via N-terminal ectodomain) with APP, forming a 1:1 stoichiometric complex, including with isoforms APP695, APP751 and APP770; this interaction retains APP in the trans-Golgi network and reduces processing into soluble APP-alpha and amyloid-beta peptides. Also interacts with APP C-terminal fragment C99 and with Abeta40. Interacts with beta-secretase BACE1/BACE; this interaction may affect BACE1-binding to APP and hence reduce BACE1-dependent APP cleavage. Interacts with LRPAP1/RAP. Interacts (via C-terminal cytosolic domain) with GGA1 and GGA2 (via N-terminal VHS domain). Interacts with PACS1. May interact (via the N-terminal ectodomain) with the morphogenetic neuropeptide, also called head activator or HA; this interaction is impaired in the presence of propeptide. Interacts with neurotensin/NTS. Interacts (via the N-terminal ectodomain) with PDGFB homodimer. Interacts (via N-terminal ectodomain) with the uPA receptor PLAUR; this interaction decreases PLAUR internalization. Interacts (via N-terminal ectodomain) with uPA/PLAU and PAI1/SERPINE1, either individually or in complex with each other, leading to endocytosis; this interaction is abolished in the presence of LRPAP1. Also interacts with the ternary complex composed of PLAUR-PLAU-PAI1. Also interacts with tPA/PLAT either alone or in complex with SERPINE1. Interacts (via C-terminus) with AP-1 and AP-2 complexes. Interacts with BMPR1A and BMPR1B. Interacts with lipoprotein lipase LPL; this interaction is optimal in slightly acidic conditions. Interacts (via N-terminal ectodomain) with GDNF (via propeptide) and GDNF receptor alpha-1/GFRA1, either individually or in complex with each other. The interaction with GDNF occurs mostly intracellularly. Also interacts with other GDNF receptor alpha family members, including GFRA2, GFRA3 and GFRA4. Interacts with the insulin receptor INSR; this interaction strongly increases the surface exposure of INSR. Interacts (via cytosolic C-terminus) with STK39/SPAK. Interacts (via N-terminal ectodomain) with the heterodimeric complex CRLF1-CLC; within this complex, the interaction is mediated predominantly by the CRLF1 moiety. Interacts with CNTFR, as well as with the tripartite signaling complex formed by CRLF1, CLC and CNTFR. Interacts (via N-terminal ectodomain) with IL6; this interaction leads to IL6 internalization and lysosomal degradation. Binding of SOLRL1 secreted N-terminal ectodomain to IL6 may increase IL6 trans signaling. Interacts with secreted IL6R; this interaction leads to IL6R internalization. Also interacts with transmembrane IL6R; this interaction does not affect IL6R subcellular location. Interacts with APOE. Interacts with apolipoprotein E-rich beta-VLDL. Interacts with APOA5; this interaction leads to APOA5 internalization and is abolished by heparin. Interaction with APOA5 results in enhanced binding to chylomicrons. Interacts with ROCK2. Interacts (via cytosolic C-terminus) with PPP3CB/calcineurin A beta. Interacts with NTRK2/TRKB; this interaction facilitates NTRK2 trafficking between synaptic plasma membranes, postsynaptic densities and cell soma, hence positively regulates BDNF signaling. Interacts (via cytosolic C-terminus) with HSPA12A in an ADP-dependent manner; this interaction affects SORL1 internalization and subcellular localization. Interacts (via N-terminal ectodomain) with ERBB2/HER2. Within the Golgi apparatus, the propeptide may be cleaved off by FURIN or a furin-like protease. After cleavage, the propeptide interacts with the mature protein N-terminus, preventing the association with other ligands. At the cell surface, partially subjected to proteolytic shedding that releases the ectodomain in the extracellular milieu. The shedding may be catalyzed by ADAM17/TACE. Following shedding, PSEN1/presenilin-1 cleaves the remaining transmembrane fragment and catalyzes the release of a C-terminal fragment in the cytosol and of a soluble N-terminal beta fragment in the extracellular milieu. The C-terminal cytosolic fragment localizes to the nucleus. Post-translationally, phosphorylation at Ser-2206 facilitates the interaction with GGA1. In terms of tissue distribution, highly expressed in brain (at protein level). Most abundant in the cerebellum, cerebral cortex and occipital pole; low levels in the putamen and thalamus. Expression is significantly reduced in the frontal cortex of patients suffering from Alzheimer disease. Also expressed in spinal cord, spleen, testis, prostate, ovary, thyroid and lymph nodes.

It is found in the golgi apparatus membrane. The protein resides in the golgi apparatus. It localises to the trans-Golgi network membrane. Its subcellular location is the endosome membrane. The protein localises to the early endosome membrane. It is found in the recycling endosome membrane. The protein resides in the endoplasmic reticulum membrane. It localises to the endosome. Its subcellular location is the multivesicular body membrane. The protein localises to the cell membrane. It is found in the cytoplasmic vesicle. The protein resides in the secretory vesicle membrane. It localises to the secreted. Sorting receptor that directs several proteins to their correct location within the cell. Along with AP-1 complex, involved Golgi apparatus - endosome sorting. Sorting receptor for APP, regulating its intracellular trafficking and processing into amyloidogenic-beta peptides. Retains APP in the trans-Golgi network, hence preventing its transit through late endosomes where amyloid beta peptides Abeta40 and Abeta42 are generated. May also sort newly produced amyloid-beta peptides to lysosomes for catabolism. Does not affect APP trafficking from the endoplasmic reticulum to Golgi compartments. Sorting receptor for the BDNF receptor NTRK2/TRKB that facilitates NTRK2 trafficking between synaptic plasma membranes, postsynaptic densities and cell soma, hence positively regulates BDNF signaling by controlling the intracellular location of its receptor. Sorting receptor for GDNF that promotes GDNF regulated, but not constitutive secretion. Sorting receptor for the GDNF-GFRA1 complex, directing it from the cell surface to endosomes. GDNF is then targeted to lysosomes and degraded, while its receptor GFRA1 recycles back to the cell membrane, resulting in a GDNF clearance pathway. The SORL1-GFRA1 complex further targets RET for endocytosis, but not for degradation, affecting GDNF-induced neurotrophic activities. Sorting receptor for ERBB2/HER2. Regulates ERBB2 subcellular distribution by promoting its recycling after internalization from endosomes back to the plasma membrane, hence stimulating phosphoinositide 3-kinase (PI3K)-dependent ERBB2 signaling. In ERBB2-dependent cancer cells, promotes cell proliferation. Sorting receptor for lipoprotein lipase LPL. Promotes LPL localization to endosomes and later to the lysosomes, leading to degradation of newly synthesized LPL. Potential sorting receptor for APOA5, inducing APOA5 internalization to early endosomes, then to late endosomes, wherefrom a portion is sent to lysosomes and degradation, another portion is sorted to the trans-Golgi network. Sorting receptor for the insulin receptor INSR. Promotes recycling of internalized INSR via the Golgi apparatus back to the cell surface, thereby preventing lysosomal INSR catabolism, increasing INSR cell surface expression and strengthening insulin signal reception in adipose tissue. Does not affect INSR internalization. Plays a role in renal ion homeostasis, controlling the phospho-regulation of SLC12A1/NKCC2 by STK39/SPAK kinase and PPP3CB/calcineurin A beta phosphatase, possibly through intracellular sorting of STK39 and PPP3CB. Stimulates, via the N-terminal ectodomain, the proliferation and migration of smooth muscle cells, possibly by increasing cell surface expression of the urokinase receptor uPAR/PLAUR. This may promote extracellular matrix proteolysis and hence facilitate cell migration. By acting on the migration of intimal smooth muscle cells, may accelerate intimal thickening following vascular injury. Promotes adhesion of monocytes. Stimulates proliferation and migration of monocytes/macrophages. Through its action on intimal smooth muscle cells and macrophages, may accelerate intimal thickening and macrophage foam cell formation in the process of atherosclerosis. Regulates hypoxia-enhanced adhesion of hematopoietic stem and progenitor cells to the bone marrow stromal cells via a PLAUR-mediated pathway. This function is mediated by the N-terminal ectodomain. Metabolic regulator, which functions to maintain the adequate balance between lipid storage and oxidation in response to changing environmental conditions, such as temperature and diet. The N-terminal ectodomain negatively regulates adipose tissue energy expenditure, acting through the inhibition the BMP/Smad pathway. May regulate signaling by the heterodimeric neurotrophic cytokine CLCF1-CRLF1 bound to the CNTFR receptor by promoting the endocytosis of the tripartite complex CLCF1-CRLF1-CNTFR and lysosomal degradation. May regulate IL6 signaling, decreasing cis signaling, possibly by interfering with IL6-binding to membrane-bound IL6R, while up-regulating trans signaling via soluble IL6R. The polypeptide is Sortilin-related receptor (SORL1) (Homo sapiens (Human)).